The following is a 288-amino-acid chain: UPF0761 membrane protein HSM_1104 (288 aa).

A run of 6 helical transmembrane segments spans residues T36–F56, Q92–I112, P127–A147, L176–V196, K200–G220, and A240–L260.

It belongs to the UPF0761 family.

It is found in the cell inner membrane. This Histophilus somni (strain 2336) (Haemophilus somnus) protein is UPF0761 membrane protein HSM_1104.